We begin with the raw amino-acid sequence, 734 residues long: MALQTPVLSPATPTVMAESALYRQRLEVIAEKRRLQEEIGAARRELEEEKLRVERLKRKSLRERWLMDGAAEGPERPEEPASKDPQSPEGQAQARIRNLEDSLFSLQSQLQLLQSASTGAQHRPAGRPAWRREGPRPLSQSAMEAAPTAPTDVDKRTSLPDAPVGMSPESPSDPREESIAVLPASRPSTEAIGTSSEANGPCPGHSPLPEQLSLGVSSVTKAKGDGAVEVVWAGLRATENSATGPTDVELEAKVEEVVLEAIGARQGTSSPELPTWVKEGRGVVEVVWEGLGGRDLDVTGESGRDAEATHTSSRRLQEQFEAETCRKEEGASRDSLEGVGQGGPGVEEGSFIWVERVALSEDWEEILMEGLEAPQGAGSAGEPEALIGAQPRGGEASWEVEKREVEKVEGIEEKGRAEKLGAEREDGVAVLPDETQGREENEAEKVERKDSEGPFPAEIATDEEKWEVKTTEGEESLEVEKGGEAEPVTTEKPLVTEKKPEGSLETERKGSEMPLDQEKDGEGSLDRESKTTEILLDGEIGDKSSLDETKGSKKLLDEKTGGEGSLDEEAEGSKKLLDREADGIEPFSEVDKTSGAKDDVSPEEQGKANEGAEFQAEDASPPGATVCVQDEPRSEEQGQQEPEKQEGLVEGAASKPEPCTEREGPPGDATLLLAETPAPEQPVESQPLLHQEASSTNPGDHPAPTYAPAQQLELAEAKEASGPKQKTCQCCVVM.

A coiled-coil region spans residues S19–R64. 2 disordered regions span residues R62–E100 and Q114–S217. Over residues G73–S82 the composition is skewed to basic and acidic residues. Positions G90–A116 form a coiled coil. Phosphoserine occurs at positions 139, 158, 167, 170, and 172. The segment covering R186–A198 has biased composition (polar residues). Residue S270 is modified to Phosphoserine. Residues D297 to A308 are compositionally biased toward basic and acidic residues. Disordered stretches follow at residues D297–E347, P374–V400, and E413–A709. T311 carries the post-translational modification Phosphothreonine. Positions R315 to L336 are enriched in basic and acidic residues. Phosphoserine is present on residues S332 and S335. Composition is skewed to basic and acidic residues over residues E413–G427, T435–E452, D462–E484, L494–T531, I540–G561, E571–D582, E589–K607, and D630–G647. The residue at position 451 (S451) is a Phosphoserine. S601 bears the Phosphoserine mark. Phosphoserine is present on S721. S-palmitoyl cysteine attachment occurs at residues C728 and C730. At C731 the chain carries Cysteine methyl ester. The S-farnesyl cysteine moiety is linked to residue C731. The propeptide at V732–M734 is removed in mature form.

This sequence belongs to the paralemmin family. As to quaternary structure, interacts with SIGIRR. Palmitoylated on Cys-728 and Cys-730 and prenylated on Cys-731; which is required for membrane association.

The protein resides in the cytoplasm. The protein localises to the cell membrane. Its function is as follows. ATP-binding protein, which may act as a adapter in the Toll-like receptor (TLR) signaling. This is Paralemmin-3 (Palm3) from Mus musculus (Mouse).